The following is a 306-amino-acid chain: Beta-lactamase (306 aa).

The first 34 residues, 1 to 34 (MNVKRKATLKFGICIGLLCVSFTGFNSLFGSTHA), serve as a signal peptide directing secretion. S89 functions as the Acyl-ester intermediate in the catalytic mechanism. Residue 251 to 253 (KSG) participates in substrate binding.

The protein belongs to the class-A beta-lactamase family.

The enzyme catalyses a beta-lactam + H2O = a substituted beta-amino acid. Its function is as follows. This protein is a beta-lactamase with a substrate specificity for penicillins. This chain is Beta-lactamase (penP), found in Bacillus amyloliquefaciens (Bacillus velezensis).